A 125-amino-acid polypeptide reads, in one-letter code: Small ribosomal subunit protein uS12 (125 aa).

Aspartate 89 bears the 3-methylthioaspartic acid mark. The segment at 100-125 is disordered; that stretch reads GSLDTQGVKDRKQSRSKYGAKRPKAA. Positions 113-125 are enriched in basic residues; the sequence is SRSKYGAKRPKAA.

It belongs to the universal ribosomal protein uS12 family. Part of the 30S ribosomal subunit. Contacts proteins S8 and S17. May interact with IF1 in the 30S initiation complex.

With S4 and S5 plays an important role in translational accuracy. In terms of biological role, interacts with and stabilizes bases of the 16S rRNA that are involved in tRNA selection in the A site and with the mRNA backbone. Located at the interface of the 30S and 50S subunits, it traverses the body of the 30S subunit contacting proteins on the other side and probably holding the rRNA structure together. The combined cluster of proteins S8, S12 and S17 appears to hold together the shoulder and platform of the 30S subunit. The protein is Small ribosomal subunit protein uS12 of Dechloromonas aromatica (strain RCB).